Reading from the N-terminus, the 241-residue chain is Tumor necrosis factor ligand superfamily member 13 (241 aa).

A propeptide spanning residues 1 to 95 (MPASSPGHMG…KDGAKSRRRR (95 aa)) is cleaved from the precursor. The 135-residue stretch at 107–241 (SVLHLVPVNI…HGTFLGFVKL (135 aa)) folds into the THD domain. An N-linked (GlcNAc...) asparagine glycan is attached at Asn115. Cysteines 187 and 202 form a disulfide.

It belongs to the tumor necrosis factor family. In terms of assembly, homotrimer. The soluble form derives from the membrane form by proteolytic processing.

Its subcellular location is the secreted. Functionally, cytokine that binds to TNFRSF13B/TACI and to TNFRSF17/BCMA. Plays a role in the regulation of tumor cell growth. May be involved in monocyte/macrophage-mediated immunological processes. The polypeptide is Tumor necrosis factor ligand superfamily member 13 (Tnfsf13) (Mus musculus (Mouse)).